We begin with the raw amino-acid sequence, 249 residues long: Tumor necrosis factor receptor superfamily member 13B (249 aa).

The Extracellular portion of the chain corresponds to 1-128; it reads MAMAFCPKDQ…LSSDQLTLYC (128 aa). TNFR-Cys repeat units follow at residues 5–38 and 42–76; these read FCPK…TDFC and NCRK…AHFC. Intrachain disulfides connect cysteine 6–cysteine 19, cysteine 22–cysteine 34, cysteine 26–cysteine 38, cysteine 43–cysteine 58, cysteine 61–cysteine 72, and cysteine 65–cysteine 76. Residues 86 to 116 form a disordered region; that stretch reads LQPELGRPQAGEVEVRSDNSGRHQGSEHGPG. Over residues 98-111 the composition is skewed to basic and acidic residues; that stretch reads VEVRSDNSGRHQGS. Residues 129-149 form a helical; Signal-anchor for type III membrane protein membrane-spanning segment; that stretch reads TLGVCLCAIFCCFLVALASFL. The Cytoplasmic segment spans residues 150 to 249; it reads RRRGEPLPSQ…ASTGDARPAT (100 aa). The interval 156–176 is disordered; it reads LPSQPAGPRGSQANSPHAHRP.

In terms of assembly, binds TRAF2, TRAF5 and TRAF6. Binds the NH2-terminal domain of CAMLG with its C-terminus.

It localises to the membrane. In terms of biological role, receptor for TNFSF13/APRIL and TNFSF13B/TALL1/BAFF/BLYS that binds both ligands with similar high affinity. Mediates calcineurin-dependent activation of NF-AT, as well as activation of NF-kappa-B and AP-1. Involved in the stimulation of B- and T-cell function and the regulation of humoral immunity. The sequence is that of Tumor necrosis factor receptor superfamily member 13B (Tnfrsf13b) from Mus musculus (Mouse).